Consider the following 132-residue polypeptide: Small ribosomal subunit protein uS8 (132 aa).

This sequence belongs to the universal ribosomal protein uS8 family. As to quaternary structure, part of the 30S ribosomal subunit. Contacts proteins S5 and S12.

Its function is as follows. One of the primary rRNA binding proteins, it binds directly to 16S rRNA central domain where it helps coordinate assembly of the platform of the 30S subunit. The chain is Small ribosomal subunit protein uS8 from Caulobacter sp. (strain K31).